A 942-amino-acid chain; its full sequence is Ubiquitin carboxyl-terminal hydrolase 33 (942 aa).

A UBP-type zinc finger spans residues 37-140 (NHCPHLDSVG…PSLPHVRQPH (104 aa)). Zn(2+) is bound by residues cysteine 39, histidine 41, cysteine 61, cysteine 64, cysteine 74, cysteine 79, cysteine 84, histidine 91, histidine 95, histidine 101, cysteine 114, and cysteine 117. One can recognise a USP domain in the interval 185-715 (TGLKNIGNTC…EAYVLFYRKS (531 aa)). The active-site Nucleophile is cysteine 194. The disordered stretch occupies residues 294–357 (VEEDPQTITT…MLIQDDENNS (64 aa)). Residues 315–327 (DVDFQSCESCSNS) show a composition bias toward polar residues. Phosphoserine is present on serine 377. The span at 419–431 (DLSTPQILPSNEG) shows a compositional bias: polar residues. Residues 419–469 (DLSTPQILPSNEGVNPRLSASPPKSGNLWPGLAPPHKKAQSASPKRKKQHK) form a disordered region. Serine 439 carries the post-translational modification Phosphoserine. Over residues 453-469 (PHKKAQSASPKRKKQHK) the composition is skewed to basic residues. Histidine 673 serves as the catalytic Proton acceptor. DUSP domains are found at residues 717–810 (EEAQ…LYIC) and 818–921 (EKIE…RPPV).

This sequence belongs to the peptidase C19 family. USP20/USP33 subfamily. In terms of assembly, interacts with VHL, leading to its ubiquitination and subsequent degradation. Interacts with ARRB1 and ARRB2. Interacts with ADRB2. Interacts with DIO2. Interacts with ROBO1. Interacts with SELENBP1; in a selenium-dependent manner. Interacts with CCP110. Ubiquitinated via a VHL-dependent pathway for proteasomal degradation. Widely expressed.

It is found in the cytoplasm. Its subcellular location is the perinuclear region. The protein localises to the cytoskeleton. It localises to the microtubule organizing center. The protein resides in the centrosome. It is found in the golgi apparatus. The catalysed reaction is Thiol-dependent hydrolysis of ester, thioester, amide, peptide and isopeptide bonds formed by the C-terminal Gly of ubiquitin (a 76-residue protein attached to proteins as an intracellular targeting signal).. Deubiquitinating enzyme involved in various processes such as centrosome duplication, cellular migration and beta-2 adrenergic receptor/ADRB2 recycling. Involved in regulation of centrosome duplication by mediating deubiquitination of CCP110 in S and G2/M phase, leading to stabilize CCP110 during the period which centrioles duplicate and elongate. Involved in cell migration via its interaction with intracellular domain of ROBO1, leading to regulate the Slit signaling. Plays a role in commissural axon guidance cross the ventral midline of the neural tube in a Slit-dependent manner, possibly by mediating the deubiquitination of ROBO1. Acts as a regulator of G-protein coupled receptor (GPCR) signaling by mediating the deubiquitination of beta-arrestins (ARRB1 and ARRB2) and beta-2 adrenergic receptor (ADRB2). Plays a central role in ADRB2 recycling and resensitization after prolonged agonist stimulation by constitutively binding ADRB2, mediating deubiquitination of ADRB2 and inhibiting lysosomal trafficking of ADRB2. Upon dissociation, it is probably transferred to the translocated beta-arrestins, leading to beta-arrestins deubiquitination and disengagement from ADRB2. This suggests the existence of a dynamic exchange between the ADRB2 and beta-arrestins. Deubiquitinates DIO2, thereby regulating thyroid hormone regulation. Mediates deubiquitination of both 'Lys-48'- and 'Lys-63'-linked polyubiquitin chains. In Homo sapiens (Human), this protein is Ubiquitin carboxyl-terminal hydrolase 33 (USP33).